Here is a 109-residue protein sequence, read N- to C-terminus: UPF0060 membrane protein PA3275 (109 aa).

The next 4 helical transmembrane spans lie at 5–25 (FWFV…YLWL), 27–47 (LGKS…FALL), 59–79 (AYAA…AFVE), and 84–104 (LWSD…VLFG).

It belongs to the UPF0060 family.

It is found in the cell inner membrane. The sequence is that of UPF0060 membrane protein PA3275 from Pseudomonas aeruginosa (strain ATCC 15692 / DSM 22644 / CIP 104116 / JCM 14847 / LMG 12228 / 1C / PRS 101 / PAO1).